Consider the following 210-residue polypeptide: Small ribosomal subunit protein uS5 (210 aa).

Residues 1-23 (MARTPSSDRPERGRGGERGDRPN) are compositionally biased toward basic and acidic residues. Residues 1–40 (MARTPSSDRPERGRGGERGDRPNRGRGGAEQTPREREESE) are disordered. The S5 DRBM domain occupies 41-104 (FVDKLVHINR…EQAKRNMIKI (64 aa)).

Belongs to the universal ribosomal protein uS5 family. As to quaternary structure, part of the 30S ribosomal subunit. Contacts proteins S4 and S8.

Functionally, with S4 and S12 plays an important role in translational accuracy. In terms of biological role, located at the back of the 30S subunit body where it stabilizes the conformation of the head with respect to the body. The sequence is that of Small ribosomal subunit protein uS5 from Paramagnetospirillum magneticum (strain ATCC 700264 / AMB-1) (Magnetospirillum magneticum).